The chain runs to 1231 residues: Fanconi anemia group J protein homolog (1231 aa).

In terms of domain architecture, Helicase ATP-binding spans 11 to 448 (GGVKILFPCR…SDHEPLRAVC (438 aa)). Position 46–53 (46–53 (SPTGSGKS)) interacts with ATP. Disordered regions lie at residues 104-126 (TFSSDRQMNSTDNAPSNISGASS) and 147-166 (QDDDFQTDRKRIRQSHDEQL). The span at 152–166 (QTDRKRIRQSHDEQL) shows a compositional bias: basic and acidic residues. The Nuclear localization signal signature appears at 155–173 (RKRIRQSHDEQLQARKRRC). Positions 291, 304, 316, and 356 each coordinate [4Fe-4S] cluster. The DEAH box motif lies at 399-402 (DEAH). A compositionally biased stretch (polar residues) spans 890–903 (SKNQQQRMQMSSTN). Disordered regions lie at residues 890-924 (SKNQQQRMQMSSTNCDDEPSQGTSSSSKNTSPTSS), 936-956 (VSEFTQPTSSTQSSVTSPPEI), and 1195-1231 (GNENAFNIGRNKGTEQKNRENRLSRSRNKGVSSFFLD). Composition is skewed to low complexity over residues 909 to 924 (SQGTSSSSKNTSPTSS) and 940 to 954 (TQPTSSTQSSVTSPP). Over residues 1206–1217 (KGTEQKNRENRL) the composition is skewed to basic and acidic residues.

Belongs to the DEAD box helicase family. DEAH subfamily. Requires [4Fe-4S] cluster as cofactor.

The protein localises to the nucleus. The catalysed reaction is Couples ATP hydrolysis with the unwinding of duplex DNA at the replication fork by translocating in the 5'-3' direction. This creates two antiparallel DNA single strands (ssDNA). The leading ssDNA polymer is the template for DNA polymerase III holoenzyme which synthesizes a continuous strand.. It carries out the reaction ATP + H2O = ADP + phosphate + H(+). Functionally, DNA-dependent helicase and 5' to 3' DNA helicase required for the maintenance of chromosomal stability. Involved in the repair of DNA double-strand breaks by homologous recombination. Involved in the repair of abasic sites at replication forks by promoting the degradation of DNA-protein cross-links: acts by catalyzing unfolding of HMCES DNA-protein cross-link via its helicase activity, exposing the underlying DNA and enabling cleavage of the DNA-protein adduct by the SPRTN metalloprotease. This chain is Fanconi anemia group J protein homolog (brip1.L), found in Xenopus laevis (African clawed frog).